The chain runs to 103 residues: Cycloviolacin-O9 (103 aa).

A signal peptide spans 1–9 (AAFALPAFA). Residues 10 to 69 (SFEKDVITPAALEAVLNRKAPLYNIMMENDAILNVIANVKTVISNPVLEEALLKTNHGVN) constitute a propeptide that is removed on maturation. The segment at residues 70 to 99 (GIPCGESCVWIPCLTSAVGCSCKSKVCYRN) is a cross-link (cyclopeptide (Gly-Asn)). 3 disulfide bridges follow: Cys-73–Cys-89, Cys-77–Cys-91, and Cys-82–Cys-96. Residues 100-103 (SLDN) constitute a propeptide that is removed on maturation.

In terms of processing, this is a cyclic peptide.

Its function is as follows. Probably participates in a plant defense mechanism. The chain is Cycloviolacin-O9 from Viola biflora (Yellow wood violet).